A 456-amino-acid polypeptide reads, in one-letter code: tRNA-2-methylthio-N(6)-dimethylallyladenosine synthase (456 aa).

Residues 17–135 (KLYLIQSFGC…LPRMIHQVQE (119 aa)) enclose the MTTase N-terminal domain. Cys-26, Cys-62, Cys-96, Cys-172, Cys-176, and Cys-179 together coordinate [4Fe-4S] cluster. Positions 158–387 (RKDKLKAWVT…IELQNLISLE (230 aa)) constitute a Radical SAM core domain. Residues 390–453 (QREEGRVLEV…PNLLEGEVVP (64 aa)) enclose the TRAM domain.

The protein belongs to the methylthiotransferase family. MiaB subfamily. As to quaternary structure, monomer. [4Fe-4S] cluster serves as cofactor.

It localises to the cytoplasm. The enzyme catalyses N(6)-dimethylallyladenosine(37) in tRNA + (sulfur carrier)-SH + AH2 + 2 S-adenosyl-L-methionine = 2-methylsulfanyl-N(6)-dimethylallyladenosine(37) in tRNA + (sulfur carrier)-H + 5'-deoxyadenosine + L-methionine + A + S-adenosyl-L-homocysteine + 2 H(+). Functionally, catalyzes the methylthiolation of N6-(dimethylallyl)adenosine (i(6)A), leading to the formation of 2-methylthio-N6-(dimethylallyl)adenosine (ms(2)i(6)A) at position 37 in tRNAs that read codons beginning with uridine. The sequence is that of tRNA-2-methylthio-N(6)-dimethylallyladenosine synthase from Desulforamulus reducens (strain ATCC BAA-1160 / DSM 100696 / MI-1) (Desulfotomaculum reducens).